The sequence spans 452 residues: 1,3-beta-glucanosyltransferase gel1 (452 aa).

Residues 1-19 (MKASAVTAALAVGASTVLA) form the signal peptide. A disulfide bridge links cysteine 71 with cysteine 100. Positions 89, 159, 160, 201, and 206 each coordinate (1,3-beta-D-glucosyl)n. Glutamate 160 serves as the catalytic Proton donor. 2 cysteine pairs are disulfide-bonded: cysteine 215-cysteine 345 and cysteine 233-cysteine 264. Residue asparagine 249 is glycosylated (N-linked (GlcNAc...) asparagine). Glutamate 261 (nucleophile) is an active-site residue. Tyrosine 292 serves as a coordination point for (1,3-beta-D-glucosyl)n. The span at 325–340 (EKTSNPSGDGNYNKTG) shows a compositional bias: polar residues. Positions 325-419 (EKTSNPSGDG…SGTSTSSKGA (95 aa)) are disordered. Asparagine 337 carries an N-linked (GlcNAc...) asparagine glycan. Over residues 393 to 419 (STATAEPGSGSATGSSSSGTSTSSKGA) the composition is skewed to low complexity. The GPI-like-anchor amidated alanine moiety is linked to residue alanine 419. The propeptide at 420 to 452 (AAGLTVPSLTMAPVVVGAVTLLSTVFGAGLVLL) is removed in mature form.

It belongs to the glycosyl hydrolase 72 family. In terms of processing, the GPI-like anchor contains a phosphoceramide lipid group.

Its subcellular location is the cell membrane. Functionally, splits internally a 1,3-beta-glucan molecule and transfers the newly generated reducing end (the donor) to the non-reducing end of another 1,3-beta-glucan molecule (the acceptor) forming a 1,3-beta linkage, resulting in the elongation of 1,3-beta-glucan chains in the cell wall. Involved in cell wall morphogenesis. The chain is 1,3-beta-glucanosyltransferase gel1 (gel1) from Aspergillus fumigatus (strain ATCC MYA-4609 / CBS 101355 / FGSC A1100 / Af293) (Neosartorya fumigata).